The chain runs to 393 residues: S-adenosylmethionine synthase 1 (393 aa).

Glu-9 contributes to the Mg(2+) binding site. His-15 provides a ligand contact to ATP. Residue Glu-43 coordinates K(+). L-methionine is bound by residues Glu-56 and Gln-99. ATP contacts are provided by residues Asp-167–Lys-169, Ser-235–Phe-238, Asp-246, Arg-252–Lys-253, Ala-269, Lys-273, and Lys-277. L-methionine is bound at residue Asp-246. Lys-277 is an L-methionine binding site.

Belongs to the AdoMet synthase family. In terms of assembly, homotetramer. Mn(2+) serves as cofactor. Mg(2+) is required as a cofactor. It depends on Co(2+) as a cofactor. The cofactor is K(+).

The protein resides in the cytoplasm. It catalyses the reaction L-methionine + ATP + H2O = S-adenosyl-L-methionine + phosphate + diphosphate. It functions in the pathway amino-acid biosynthesis; S-adenosyl-L-methionine biosynthesis; S-adenosyl-L-methionine from L-methionine: step 1/1. In terms of biological role, catalyzes the formation of S-adenosylmethionine from methionine and ATP. The reaction comprises two steps that are both catalyzed by the same enzyme: formation of S-adenosylmethionine (AdoMet) and triphosphate, and subsequent hydrolysis of the triphosphate. In Solanum tuberosum (Potato), this protein is S-adenosylmethionine synthase 1 (METK1).